The chain runs to 694 residues: Phosphatase and actin regulator 4-A (694 aa).

Basic and acidic residues-rich tracts occupy residues 1-13 (MEDR…DHSE) and 46-72 (SSDS…ELIK). 5 disordered regions span residues 1–29 (MEDR…KSKF), 42–169 (RKRK…QPLP), 192–403 (VNEV…HIRI), 426–445 (LFMQ…RSLP), and 450–572 (LLKV…QIRQ). An RPEL 1 repeat occupies 55-80 (EVLERKISTRKPREELIKRGLLVEVP). Residues 240-267 (SISTSVTQESAVAGQKSDSSNRLQSSAP) are compositionally biased toward polar residues. A compositionally biased stretch (low complexity) spans 300–317 (AELSLALAGSPLSPAGSR). 2 stretches are compositionally biased toward pro residues: residues 318–327 (PSPPLPPKRA) and 372–381 (SNPPVPPLTL). Acidic residues-rich tracts occupy residues 455-467 (DDED…DESL), 499-511 (QEEE…DTDS), and 519-529 (DDEEEEEEEET). RPEL repeat units follow at residues 576–601 (TQLN…QKNE) and 613–638 (RRLT…RFNE).

The protein belongs to the phosphatase and actin regulator family. In terms of assembly, binds ppp1ca and actin.

The protein localises to the cytoplasm. It localises to the cell projection. Its subcellular location is the lamellipodium. Regulator of protein phosphatase 1 (PP1) required for neural tube and optic fissure closure, and enteric neural crest cell (ENCCs) migration during development. Acts as an activator of PP1. During neural tube closure, localizes to the ventral neural tube and activates PP1, leading to down-regulate cell proliferation within cranial neural tissue and the neural retina. Also acts as a regulator of migration of enteric neural crest cells (ENCCs) by activating PP1, leading to repression of the integrin signaling through the rho/rock pathway. The sequence is that of Phosphatase and actin regulator 4-A (phactr4-a) from Xenopus laevis (African clawed frog).